A 212-amino-acid polypeptide reads, in one-letter code: Probable GTP-binding protein EngB (212 aa).

The EngB-type G domain occupies serine 38–proline 210. GTP contacts are provided by residues glycine 46–serine 53, glycine 73–glutamine 77, aspartate 91–glycine 94, threonine 158–aspartate 161, and valine 189–asparagine 191. 2 residues coordinate Mg(2+): serine 53 and threonine 75.

The protein belongs to the TRAFAC class TrmE-Era-EngA-EngB-Septin-like GTPase superfamily. EngB GTPase family. Mg(2+) serves as cofactor.

In terms of biological role, necessary for normal cell division and for the maintenance of normal septation. The sequence is that of Probable GTP-binding protein EngB from Rickettsia conorii (strain ATCC VR-613 / Malish 7).